Reading from the N-terminus, the 262-residue chain is Small ribosomal subunit protein uS2 (262 aa).

The disordered stretch occupies residues 228–262 (VSNEEVAAEQNINLDDKEESEQAETTEENTSVESN). The segment covering 243 to 254 (DKEESEQAETTE) has biased composition (acidic residues).

The protein belongs to the universal ribosomal protein uS2 family.

The sequence is that of Small ribosomal subunit protein uS2 from Staphylococcus epidermidis (strain ATCC 35984 / DSM 28319 / BCRC 17069 / CCUG 31568 / BM 3577 / RP62A).